A 110-amino-acid chain; its full sequence is MLNYLWFFLAALFEIAGCYAFWMWLRQGKSALWVIPALVSLTLFALLLTKVEATYAGRAYAAYGGIYIVASIGWLAVVERVRPLGSDWLGLALCVIGASVILFGPRFSNG.

The next 4 membrane-spanning stretches (helical) occupy residues 5–25 (LWFF…WMWL), 31–51 (ALWV…LTKV), 59–79 (AYAA…AVVE), and 84–104 (LGSD…ILFG).

Belongs to the UPF0060 family.

It localises to the cell inner membrane. This Pseudomonas fluorescens (strain ATCC BAA-477 / NRRL B-23932 / Pf-5) protein is UPF0060 membrane protein PFL_4337.